The chain runs to 98 residues: Cystatin-A (98 aa).

M1 is subject to N-acetylmethionine. Residues Q46–G50 carry the Secondary area of contact motif.

This sequence belongs to the cystatin family.

It is found in the cytoplasm. In terms of biological role, this is an intracellular thiol proteinase inhibitor. This chain is Cystatin-A (CSTA), found in Bos taurus (Bovine).